Reading from the N-terminus, the 334-residue chain is Sulfhydrogenase 2 subunit beta (334 aa).

4Fe-4S ferredoxin-type domains lie at 220–250 (KVWKKYAEKCLGCGNCTIVCPTCRCYEVCDT) and 294–328 (CKNYFDPEAGFNCVGCGRCDEFCPARIEHVKVLDE). Residues Cys-229, Cys-232, Cys-235, Cys-239, Cys-306, Cys-309, Cys-312, and Cys-316 each coordinate [4Fe-4S] cluster.

Dimer of heterotetramer of alpha, beta, gamma and delta subunits. The nickel-containing alpha and delta subunits constitute the hydrogenase activity. The beta and gamma subunits (flavin-containing dimer) constitute the sulfur reductase activity. Requires [4Fe-4S] cluster as cofactor.

The protein resides in the cytoplasm. The catalysed reaction is n sulfur + H2 = (n-1) sulfur + hydrogen sulfide + H(+). Functionally, part of a bifunctional enzyme complex that functions as a hydrogen-evolving hydrogenase with sulfur-reducing activity. May play a role in hydrogen cycling during fermentative growth. Activity exhibited with NAD in addition to NADPH. The beta and gamma subunits form the sulfur-reducing component that catalyzes the cytoplasmic production of hydrogen sulfide in the presence of elemental sulfur. In Pyrococcus furiosus (strain ATCC 43587 / DSM 3638 / JCM 8422 / Vc1), this protein is Sulfhydrogenase 2 subunit beta.